We begin with the raw amino-acid sequence, 519 residues long: T-complex protein 11-like protein 2 (519 aa).

The disordered stretch occupies residues 1 to 57 (MPFNGEKQCVSEDQPSDSDSSRFSESMASLSDYECSRQSFTSDSSSKSSSPASTSPP). Serine 16 is modified (phosphoserine). 2 stretches are compositionally biased toward low complexity: residues 17-29 (DSDS…SMAS) and 36-55 (SRQS…ASTS).

Belongs to the TCP11 family. In terms of assembly, interacts with FMNL2; this interaction promotes muscle-derived satellite cell (MDSC) migration and differentiation.

The protein resides in the cytoplasm. The protein localises to the cytoskeleton. Promotes the migration of muscle-derived satellite cells (MDSCs) during differentiation throught interaction with FMNL2 and therefore may participate in microfilament assembly. In Bos taurus (Bovine), this protein is T-complex protein 11-like protein 2.